Here is a 1175-residue protein sequence, read N- to C-terminus: Solute carrier family 9 member C1 (1175 aa).

Topologically, residues 1–39 (MEMEEISENLTASHSIKLTNMWLELLKSVFLSTPQDLPE) are extracellular. A helical membrane pass occupies residues 40 to 59 (IILILSLICTVGAFLNMHLK). Topologically, residues 60 to 64 (DFPIP) are cytoplasmic. A helical membrane pass occupies residues 65 to 82 (LPVILFLIGCCFEILSFA). The Extracellular portion of the chain corresponds to 83-98 (STQIQIYADAIQWMDP). The helical transmembrane segment at 99–115 (DIFFGIFTPVIIFNVAF) threads the bilayer. At 116–125 (DMDIYMLQKL) the chain is on the cytoplasmic side. A helical membrane pass occupies residues 126–151 (FWQILVITIPGFLINYTLILWYLQSV). The interval 126-213 (FWQILVITIP…SLVIYSGVVH (88 aa)) is transport core domain. Residues 152-157 (NKLSLK) lie on the Extracellular side of the membrane. A helical membrane pass occupies residues 158–183 (TVPWLLFSAVLISSDPMLTSASIRDL). Topologically, residues 184–186 (GLS) are cytoplasmic. The helical transmembrane segment at 187 to 212 (RSLTNLINGESLLTSVLSLVIYSGVV) threads the bilayer. Topologically, residues 213–225 (HIRFKSKSVNHTL) are extracellular. A helical membrane pass occupies residues 226 to 257 (AHKVMSTAWSYIVESFITGIVFTKVIQLWMAT). Over 258 to 261 (IFGD) the chain is Cytoplasmic. The chain crosses the membrane as a helical span at residues 262-283 (DVNHITLIFSVLYLIFYVCELV). Topologically, residues 284-286 (GMS) are extracellular. A helical transmembrane segment spans residues 287–300 (GIFTLATIGLFLNS). Over 301-307 (TSFKPGV) the chain is Cytoplasmic. Residues 308–339 (EAFLLEFWNCLSFIGFLMVFTFIGLLIPAHTY) traverse the membrane as a helical segment. The Extracellular segment spans residues 340 to 344 (LHISF). The helical transmembrane segment at 345–374 (SDVYYSLNIYFTLIVLRLLVFLLMSPILSR) threads the bilayer. The tract at residues 345 to 446 (SDVYYSLNIY…FILPMAVTKL (102 aa)) is transport core domain. The Cytoplasmic segment spans residues 375–380 (LGHGFS). The chain crosses the membrane as a helical span at residues 381–411 (WRWAFIMVWSEMKGTPNINMALLLAYSDISL). The Extracellular segment spans residues 412-415 (GSER). A helical transmembrane segment spans residues 416 to 446 (ERSQILFHGVSVCVITLIVNRFILPMAVTKL). Over 447 to 632 (GLRDVTSTKY…ACHRIVFTNE (186 aa)) the chain is Cytoplasmic. The ion transport-like stretch occupies residues 618 to 698 (YMFLHACHRI…EFFSHTWLLF (81 aa)). The chain crosses the membrane as a helical span at residues 633–653 (FEYTGYLVVLMSTYPMIICWI). Over 654-657 (SRLK) the chain is Extracellular. Residues 658 to 684 (DIYDNEIKCANYYFLAFYILEALLKVA) traverse the membrane as a helical segment. Over 685-691 (AMRKEFF) the chain is Cytoplasmic. The chain crosses the membrane as a helical span at residues 692-716 (SHTWLLFELGITLVGVLDIILIETD). The Extracellular segment spans residues 717 to 724 (SISYNFDL). Residues 725–751 (TETVVFMNVIRLLRILRILKLVTPKLL) form a helical membrane-spanning segment. The Cytoplasmic portion of the chain corresponds to 752–1175 (QIIDKRMSQQ…EELIEENINI (424 aa)). The segment covering 1137 to 1146 (MKPDSERESF) has biased composition (basic and acidic residues). The segment at 1137–1175 (MKPDSERESFETLDETSEEDNGKKENQENEELIEENINI) is disordered. Acidic residues predominate over residues 1164 to 1175 (ENEELIEENINI).

This sequence belongs to the monovalent cation:proton antiporter 1 (CPA1) transporter (TC 2.A.36) family. As to quaternary structure, interacts with soluble adenylyl cyclase (sAC). As to expression, testis-specific. Specifically present in the principal piece of sperm tail (at protein level).

It localises to the cell projection. The protein localises to the cilium. It is found in the flagellum membrane. In terms of biological role, sperm-specific solute carrier involved in intracellular pH regulation of spermatozoa. Required for sperm motility and fertility. Involved in sperm cell hyperactivation, a step needed for sperm motility which is essential late in the preparation of sperm for fertilization. Required for the expression and bicarbonate regulation of the soluble adenylyl cyclase (sAC). The polypeptide is Solute carrier family 9 member C1 (Slc9c1) (Mus musculus (Mouse)).